A 120-amino-acid polypeptide reads, in one-letter code: Small ribosomal subunit protein eS17 (120 aa).

The protein belongs to the eukaryotic ribosomal protein eS17 family. Component of the small ribosomal subunit.

The protein resides in the cytoplasm. The chain is Small ribosomal subunit protein eS17 (RPS17) from Encephalitozoon cuniculi (strain GB-M1) (Microsporidian parasite).